Consider the following 101-residue polypeptide: NAD(P)H-quinone oxidoreductase subunit 4L, chloroplastic (101 aa).

Transmembrane regions (helical) follow at residues 2–22, 32–52, and 61–81; these read MTEH…YGLI, MCLE…SDLF, and IFSI…PAIV.

The protein belongs to the complex I subunit 4L family. In terms of assembly, NDH is composed of at least 16 different subunits, 5 of which are encoded in the nucleus.

It is found in the plastid. It localises to the chloroplast thylakoid membrane. It catalyses the reaction a plastoquinone + NADH + (n+1) H(+)(in) = a plastoquinol + NAD(+) + n H(+)(out). The enzyme catalyses a plastoquinone + NADPH + (n+1) H(+)(in) = a plastoquinol + NADP(+) + n H(+)(out). NDH shuttles electrons from NAD(P)H:plastoquinone, via FMN and iron-sulfur (Fe-S) centers, to quinones in the photosynthetic chain and possibly in a chloroplast respiratory chain. The immediate electron acceptor for the enzyme in this species is believed to be plastoquinone. Couples the redox reaction to proton translocation, and thus conserves the redox energy in a proton gradient. The protein is NAD(P)H-quinone oxidoreductase subunit 4L, chloroplastic of Liriodendron tulipifera (Tuliptree).